The sequence spans 1171 residues: DNA-directed RNA polymerase subunit beta (1171 aa).

This sequence belongs to the RNA polymerase beta chain family. In terms of assembly, the RNAP catalytic core consists of 2 alpha, 1 beta, 1 beta' and 1 omega subunit. When a sigma factor is associated with the core the holoenzyme is formed, which can initiate transcription.

It catalyses the reaction RNA(n) + a ribonucleoside 5'-triphosphate = RNA(n+1) + diphosphate. Functionally, DNA-dependent RNA polymerase catalyzes the transcription of DNA into RNA using the four ribonucleoside triphosphates as substrates. This is DNA-directed RNA polymerase subunit beta from Arthrobacter sp. (strain FB24).